A 139-amino-acid polypeptide reads, in one-letter code: Insulin-like growth factor (139 aa).

The signal sequence occupies residues 1-38; it reads YIRRVRQGSIYSLLVESQQWCKLTLTLLLLLALLTRCT. The interval 39 to 67 is b; it reads LSETLCGSELVDTLQFVCDDRGFFFVPQH. Residues 68–82 are c; that stretch reads VPPRRGAHRRSRARK. The segment at 83 to 103 is a; sequence GIVEECCFKGCSLRLLEMYCA. The tract at residues 104–113 is d; it reads RPSKAERDVA. The tract at residues 108-139 is disordered; sequence AERDVARPRQRPHRASQHSRRGSQSRGRGRSR. The interval 114 to 139 is e; it reads RPRQRPHRASQHSRRGSQSRGRGRSR. The segment covering 115-139 has biased composition (basic residues); sequence PRQRPHRASQHSRRGSQSRGRGRSR.

The protein belongs to the insulin family.

The protein localises to the secreted. Its function is as follows. The insulin-like growth factors, isolated from plasma, are structurally and functionally related to insulin but have a much higher growth-promoting activity. This is Insulin-like growth factor from Myxine glutinosa (Atlantic hagfish).